A 286-amino-acid chain; its full sequence is Rhomboid-type serine protease 2 (286 aa).

Helical transmembrane passes span 18 to 38 (ITQY…LLVI), 66 to 86 (SFYL…VGLF), 99 to 119 (VFTG…FCIV), 122 to 142 (LLYP…FMSF), 164 to 183 (VSIP…MVLI), and 188 to 210 (FWGH…KFLY). The active-site Nucleophile is the S133. Residue H191 is part of the active site.

This sequence belongs to the peptidase S54 family.

The protein resides in the golgi apparatus membrane. It localises to the golgi apparatus. Its subcellular location is the cis-Golgi network membrane. It carries out the reaction Cleaves type-1 transmembrane domains using a catalytic dyad composed of serine and histidine that are contributed by different transmembrane domains.. Functionally, probable rhomboid-type serine protease that catalyzes intramembrane proteolysis. This chain is Rhomboid-type serine protease 2 (RBD2), found in Debaryomyces hansenii (strain ATCC 36239 / CBS 767 / BCRC 21394 / JCM 1990 / NBRC 0083 / IGC 2968) (Yeast).